We begin with the raw amino-acid sequence, 87 residues long: Putative defensin-like protein 317 (87 aa).

An N-terminal signal peptide occupies residues 1–24 (MKSFLVAFLIVLVFFCVEMKIGNG). Disulfide bonds link cysteine 38-cysteine 71, cysteine 47-cysteine 80, and cysteine 56-cysteine 82.

This sequence belongs to the DEFL family.

It localises to the secreted. This chain is Putative defensin-like protein 317, found in Arabidopsis thaliana (Mouse-ear cress).